Here is a 332-residue protein sequence, read N- to C-terminus: Biotin synthase (332 aa).

One can recognise a Radical SAM core domain in the interval phenylalanine 52–arginine 282. [4Fe-4S] cluster is bound by residues cysteine 70, cysteine 74, and cysteine 77. The [2Fe-2S] cluster site is built by cysteine 114, cysteine 147, cysteine 207, and arginine 277.

Belongs to the radical SAM superfamily. Biotin synthase family. Homodimer. [4Fe-4S] cluster serves as cofactor. The cofactor is [2Fe-2S] cluster.

It carries out the reaction (4R,5S)-dethiobiotin + (sulfur carrier)-SH + 2 reduced [2Fe-2S]-[ferredoxin] + 2 S-adenosyl-L-methionine = (sulfur carrier)-H + biotin + 2 5'-deoxyadenosine + 2 L-methionine + 2 oxidized [2Fe-2S]-[ferredoxin]. Its pathway is cofactor biosynthesis; biotin biosynthesis; biotin from 7,8-diaminononanoate: step 2/2. In terms of biological role, catalyzes the conversion of dethiobiotin (DTB) to biotin by the insertion of a sulfur atom into dethiobiotin via a radical-based mechanism. The sequence is that of Biotin synthase from Aquifex aeolicus (strain VF5).